The primary structure comprises 100 residues: uncharacterized protein (100 aa).

3 helical membrane passes run 11-33 (VWSI…SVLM), 45-64 (WMLA…SLVY), and 68-90 (WEGA…GYLI).

It is found in the cell membrane. This is an uncharacterized protein from Bacillus subtilis (strain 168).